Consider the following 293-residue polypeptide: Ribosomal RNA small subunit methyltransferase A (293 aa).

6 residues coordinate S-adenosyl-L-methionine: Asn38, Val40, Gly65, Glu86, Asp116, and Asn135.

This sequence belongs to the class I-like SAM-binding methyltransferase superfamily. rRNA adenine N(6)-methyltransferase family. RsmA subfamily.

Its subcellular location is the cytoplasm. It carries out the reaction adenosine(1518)/adenosine(1519) in 16S rRNA + 4 S-adenosyl-L-methionine = N(6)-dimethyladenosine(1518)/N(6)-dimethyladenosine(1519) in 16S rRNA + 4 S-adenosyl-L-homocysteine + 4 H(+). In terms of biological role, specifically dimethylates two adjacent adenosines (A1518 and A1519) in the loop of a conserved hairpin near the 3'-end of 16S rRNA in the 30S particle. May play a critical role in biogenesis of 30S subunits. This is Ribosomal RNA small subunit methyltransferase A from Nocardia farcinica (strain IFM 10152).